The primary structure comprises 341 residues: N-acetyl-gamma-glutamyl-phosphate reductase (341 aa).

The active site involves C147.

It belongs to the NAGSA dehydrogenase family. Type 1 subfamily.

Its subcellular location is the cytoplasm. The catalysed reaction is N-acetyl-L-glutamate 5-semialdehyde + phosphate + NADP(+) = N-acetyl-L-glutamyl 5-phosphate + NADPH + H(+). The protein operates within amino-acid biosynthesis; L-arginine biosynthesis; N(2)-acetyl-L-ornithine from L-glutamate: step 3/4. Its function is as follows. Catalyzes the NADPH-dependent reduction of N-acetyl-5-glutamyl phosphate to yield N-acetyl-L-glutamate 5-semialdehyde. This is N-acetyl-gamma-glutamyl-phosphate reductase from Staphylococcus epidermidis (strain ATCC 35984 / DSM 28319 / BCRC 17069 / CCUG 31568 / BM 3577 / RP62A).